The chain runs to 35 residues: uncharacterized protein (35 aa).

Residues 1–27 (MDQNEANIYNENNENNENNENENCQNE) are compositionally biased toward low complexity. A disordered region spans residues 1–35 (MDQNEANIYNENNENNENNENENCQNEPIRIKIII).

This is an uncharacterized protein from Dictyostelium discoideum (Social amoeba).